The primary structure comprises 69 residues: Small, acid-soluble spore protein 1 (69 aa).

The protein belongs to the alpha/beta-type SASP family.

Functionally, SASP are bound to spore DNA. They are double-stranded DNA-binding proteins that cause DNA to change to an a-like conformation. They protect the DNA backbone from chemical and enzymatic cleavage and are thus involved in dormant spore's high resistance to UV light. The protein is Small, acid-soluble spore protein 1 (Su-1) of Sporosarcina ureae.